We begin with the raw amino-acid sequence, 332 residues long: Anthranilate phosphoribosyltransferase (332 aa).

5-phospho-alpha-D-ribose 1-diphosphate contacts are provided by residues G79, 82–83 (GD), T87, 89–92 (NIST), 107–115 (KHGNYGATS), and A119. An anthranilate-binding site is contributed by G79. Residue S91 coordinates Mg(2+). N110 contacts anthranilate. R165 contacts anthranilate. 2 residues coordinate Mg(2+): D223 and E224.

Belongs to the anthranilate phosphoribosyltransferase family. As to quaternary structure, homodimer. Mg(2+) is required as a cofactor.

The catalysed reaction is N-(5-phospho-beta-D-ribosyl)anthranilate + diphosphate = 5-phospho-alpha-D-ribose 1-diphosphate + anthranilate. It participates in amino-acid biosynthesis; L-tryptophan biosynthesis; L-tryptophan from chorismate: step 2/5. In terms of biological role, catalyzes the transfer of the phosphoribosyl group of 5-phosphorylribose-1-pyrophosphate (PRPP) to anthranilate to yield N-(5'-phosphoribosyl)-anthranilate (PRA). The polypeptide is Anthranilate phosphoribosyltransferase (Bacteroides thetaiotaomicron (strain ATCC 29148 / DSM 2079 / JCM 5827 / CCUG 10774 / NCTC 10582 / VPI-5482 / E50)).